The primary structure comprises 33 residues: MRSEQISGSSLNPSCRFSSAYSPVTRQRKDMSR.

Polar residues predominate over residues 1 to 25 (MRSEQISGSSLNPSCRFSSAYSPVT). The segment at 1 to 33 (MRSEQISGSSLNPSCRFSSAYSPVTRQRKDMSR) is disordered.

The chain is rho operon leader peptide (rhoL) from Escherichia coli O157:H7.